Here is a 278-residue protein sequence, read N- to C-terminus: UPF0758 protein BURPS668_0979 (278 aa).

The disordered stretch occupies residues Met1–Asp64. The span at Ala22–Ala59 shows a compositional bias: low complexity. Positions Leu156–Ile278 constitute an MPN domain. 3 residues coordinate Zn(2+): His227, His229, and Asp240. Residues His227 to Asp240 carry the JAMM motif motif.

The protein belongs to the UPF0758 family.

The protein is UPF0758 protein BURPS668_0979 of Burkholderia pseudomallei (strain 668).